The chain runs to 46 residues: U2-plectoxin-Pt1a (46 aa).

In terms of processing, contains 4 disulfide bonds. In terms of tissue distribution, expressed by the venom gland.

The protein localises to the secreted. Functionally, potent toxin that may paralyze and/or kill insect pests such as H.virescens (lepidoptera), S.exigua (beet armyworm) and M.sexta (tobacco hornworm). This chain is U2-plectoxin-Pt1a, found in Plectreurys tristis (Spider).